The chain runs to 296 residues: Glycine and tyrosine-rich protein (296 aa).

A signal peptide spans 1-18; it reads MKVLVTALIISFSTAVLT. Residues 157-280 form a disordered region; sequence MESRLRPQAT…NQPEETPAPN (124 aa). Positions 172 to 264 are enriched in low complexity; it reads TGGQPSTGGK…STGGQPSTGG (93 aa).

Component of the acid-insoluble and acid-soluble organic matrix of calcified layers of the shell (at protein level).

Its subcellular location is the secreted. In Lottia gigantea (Giant owl limpet), this protein is Glycine and tyrosine-rich protein.